Here is a 487-residue protein sequence, read N- to C-terminus: Chromosomal replication initiator protein DnaA (487 aa).

The interval 1–92 (MTIKGGVVSQ…SELWTANDAT (92 aa)) is domain I, interacts with DnaA modulators. The segment at 92–144 (TGRRLDLKSRLEFESVGGAGYEAKAEPIEIVLPVSSDVPALAPTNGSKPSPVQ) is domain II. The interval 145-367 (GLQERFTFDT…GALNTLSARA (223 aa)) is domain III, AAA+ region. ATP-binding residues include Gly189, Gly191, Lys192, and Thr193. The interval 368–487 (GEGVSRLTLE…LETITRKLRG (120 aa)) is domain IV, binds dsDNA.

Belongs to the DnaA family. As to quaternary structure, oligomerizes as a right-handed, spiral filament on DNA at oriC.

It is found in the cytoplasm. Functionally, plays an essential role in the initiation and regulation of chromosomal replication. ATP-DnaA binds to the origin of replication (oriC) to initiate formation of the DNA replication initiation complex once per cell cycle. Binds the DnaA box (a 9 base pair repeat at the origin) and separates the double-stranded (ds)DNA. Forms a right-handed helical filament on oriC DNA; dsDNA binds to the exterior of the filament while single-stranded (ss)DNA is stabiized in the filament's interior. The ATP-DnaA-oriC complex binds and stabilizes one strand of the AT-rich DNA unwinding element (DUE), permitting loading of DNA polymerase. After initiation quickly degrades to an ADP-DnaA complex that is not apt for DNA replication. Binds acidic phospholipids. This is Chromosomal replication initiator protein DnaA from Caulobacter sp. (strain K31).